Consider the following 321-residue polypeptide: Ubiquitin carboxyl-terminal hydrolase ubh-4 (321 aa).

Residues 6–220 (SWCLIESDPG…ITFNLMALVP (215 aa)) enclose the UCH catalytic domain. Cysteine 83 (nucleophile) is an active-site residue. The active-site Proton donor is histidine 158. The region spanning 273–301 (NYTPFVIELMKILAKEGKLVGLVDNAYQA) is the ULD domain.

The protein belongs to the peptidase C12 family. As to quaternary structure, interacts with proteasome 19S subunit rpn-13. Highly expressed in intestine and to a lesser extent in other tissues including muscles and neurons.

The enzyme catalyses Thiol-dependent hydrolysis of ester, thioester, amide, peptide and isopeptide bonds formed by the C-terminal Gly of ubiquitin (a 76-residue protein attached to proteins as an intracellular targeting signal).. In terms of biological role, ubiquitin-protein hydrolase involved both in the processing of ubiquitin precursors and of ubiquitinated proteins. This enzyme is a thiol protease that recognizes and hydrolyzes a peptide bond at the C-terminal glycine of ubiquitin. The sequence is that of Ubiquitin carboxyl-terminal hydrolase ubh-4 from Caenorhabditis elegans.